The chain runs to 156 residues: SsrA-binding protein (156 aa).

Belongs to the SmpB family.

The protein localises to the cytoplasm. In terms of biological role, required for rescue of stalled ribosomes mediated by trans-translation. Binds to transfer-messenger RNA (tmRNA), required for stable association of tmRNA with ribosomes. tmRNA and SmpB together mimic tRNA shape, replacing the anticodon stem-loop with SmpB. tmRNA is encoded by the ssrA gene; the 2 termini fold to resemble tRNA(Ala) and it encodes a 'tag peptide', a short internal open reading frame. During trans-translation Ala-aminoacylated tmRNA acts like a tRNA, entering the A-site of stalled ribosomes, displacing the stalled mRNA. The ribosome then switches to translate the ORF on the tmRNA; the nascent peptide is terminated with the 'tag peptide' encoded by the tmRNA and targeted for degradation. The ribosome is freed to recommence translation, which seems to be the essential function of trans-translation. This Renibacterium salmoninarum (strain ATCC 33209 / DSM 20767 / JCM 11484 / NBRC 15589 / NCIMB 2235) protein is SsrA-binding protein.